Consider the following 525-residue polypeptide: MSNIHEHKILILDFGSQYTQLIARRIREIGVYCELWAWDVSEAQIKGFAPNGIILAGGPESVTADESPRAPEYVFNAGVPVLGICYGMQTMSEQLGGKVIEGIGEGEFGYAQIEIQEPSELFKSIEDAISESGKPLLDVWMSHGDKVLDIPEGFVTVANTETCPHAAMANEDKKFYGVQFHPEVTHTRQGKRMLEHFALDICECEANWKPTSIIEDAVERLKKQIGDDEVILGLSGGVDSSVVAMLLHRAIGDKLTCVFVDNGLLRLNEADQVMDMFGDHFGLNIVHVNAENRFLDAMKGEADPEAKRKIIGHVFVEIFDEESKKCKNAKWLAQGTIYPDVIESAGSATGKAHVIKSHHNVGGLPDDMELGLVEPLRELFKDEVRKIGLELGLPYDMLYRHPFPGPGLGVRVLGEVKKEYCDLLRLADAIFIEELHKAELYHKVSQAFTVFLPVRSVGVMGDGRKYDWVVSLRAVETIDFMTAHWAHLPYDFLGRVSNRIINEIDGISRVVYDISGKPPATIEWE.

The Glutamine amidotransferase type-1 domain maps to 8-207 (KILILDFGSQ…ALDICECEAN (200 aa)). Cys85 acts as the Nucleophile in catalysis. Residues His181 and Glu183 contribute to the active site. In terms of domain architecture, GMPS ATP-PPase spans 208–400 (WKPTSIIEDA…LGLPYDMLYR (193 aa)). 235–241 (SGGVDSS) serves as a coordination point for ATP.

In terms of assembly, homodimer.

The enzyme catalyses XMP + L-glutamine + ATP + H2O = GMP + L-glutamate + AMP + diphosphate + 2 H(+). It functions in the pathway purine metabolism; GMP biosynthesis; GMP from XMP (L-Gln route): step 1/1. Functionally, catalyzes the synthesis of GMP from XMP. The protein is GMP synthase [glutamine-hydrolyzing] of Shewanella sediminis (strain HAW-EB3).